The primary structure comprises 513 residues: GMP synthase [glutamine-hydrolyzing] (513 aa).

The region spanning 8–198 is the Glutamine amidotransferase type-1 domain; the sequence is KIIVLDYGSQ…ALNICGAKGN (191 aa). Cys85 serves as the catalytic Nucleophile. Residues His172 and Glu174 contribute to the active site. The GMPS ATP-PPase domain maps to 199-388; it reads WSMENFIDMQ…LGMPDEIVWR (190 aa). ATP is bound at residue 226–232; the sequence is SGGVDSS.

In terms of assembly, homodimer.

The enzyme catalyses XMP + L-glutamine + ATP + H2O = GMP + L-glutamate + AMP + diphosphate + 2 H(+). It participates in purine metabolism; GMP biosynthesis; GMP from XMP (L-Gln route): step 1/1. Functionally, catalyzes the synthesis of GMP from XMP. The polypeptide is GMP synthase [glutamine-hydrolyzing] (guaA) (Lactococcus lactis subsp. lactis (strain IL1403) (Streptococcus lactis)).